A 310-amino-acid chain; its full sequence is Protoheme IX farnesyltransferase 2 (310 aa).

9 consecutive transmembrane segments (helical) span residues 25–45, 49–69, 98–118, 121–141, 145–165, 176–196, 222–242, 245–265, and 277–297; these read PGII…AAKG, LVLM…GCAI, HVLL…ALFT, LALL…SLYM, SVYG…VGYC, VILL…IAIF, IVLY…AGYT, AFMA…LKGY, and QVFG…ALDF.

This sequence belongs to the UbiA prenyltransferase family. Protoheme IX farnesyltransferase subfamily.

It localises to the cell inner membrane. It catalyses the reaction heme b + (2E,6E)-farnesyl diphosphate + H2O = Fe(II)-heme o + diphosphate. It functions in the pathway porphyrin-containing compound metabolism; heme O biosynthesis; heme O from protoheme: step 1/1. Its function is as follows. Converts heme B (protoheme IX) to heme O by substitution of the vinyl group on carbon 2 of heme B porphyrin ring with a hydroxyethyl farnesyl side group. The sequence is that of Protoheme IX farnesyltransferase 2 from Shewanella sp. (strain ANA-3).